The sequence spans 89 residues: Cell division topological specificity factor (89 aa).

The protein belongs to the MinE family.

In terms of biological role, prevents the cell division inhibition by proteins MinC and MinD at internal division sites while permitting inhibition at polar sites. This ensures cell division at the proper site by restricting the formation of a division septum at the midpoint of the long axis of the cell. The protein is Cell division topological specificity factor of Janthinobacterium sp. (strain Marseille) (Minibacterium massiliensis).